The chain runs to 394 residues: Quinolinate synthase (394 aa).

Iminosuccinate-binding residues include His57 and Ser74. Cys121 lines the [4Fe-4S] cluster pocket. Iminosuccinate contacts are provided by residues 153 to 155 (YMN) and Ser174. Cys250 is a binding site for [4Fe-4S] cluster. Iminosuccinate contacts are provided by residues 276-278 (HPE) and Thr293. Cys340 serves as a coordination point for [4Fe-4S] cluster.

This sequence belongs to the quinolinate synthase family. Type 3 subfamily. [4Fe-4S] cluster serves as cofactor.

The protein localises to the cytoplasm. It catalyses the reaction iminosuccinate + dihydroxyacetone phosphate = quinolinate + phosphate + 2 H2O + H(+). Its pathway is cofactor biosynthesis; NAD(+) biosynthesis; quinolinate from iminoaspartate: step 1/1. In terms of biological role, catalyzes the condensation of iminoaspartate with dihydroxyacetone phosphate to form quinolinate. This chain is Quinolinate synthase, found in Nocardioides sp. (strain ATCC BAA-499 / JS614).